A 197-amino-acid chain; its full sequence is Holliday junction branch migration complex subunit RuvA (197 aa).

Positions 1-64 (MYEYIKGTYM…EDFIGLYGFG (64 aa)) are domain I. The interval 65 to 143 (SKEELELFNK…VNLDEGIQTD (79 aa)) is domain II. A flexible linker region spans residues 144 to 149 (SNDIKV). The segment at 149–197 (VSSKILEEAKEALMSLGYSEKECEKALKNVEEKESLEIIIKESLKFLMN) is domain III.

The protein belongs to the RuvA family. As to quaternary structure, homotetramer. Forms an RuvA(8)-RuvB(12)-Holliday junction (HJ) complex. HJ DNA is sandwiched between 2 RuvA tetramers; dsDNA enters through RuvA and exits via RuvB. An RuvB hexamer assembles on each DNA strand where it exits the tetramer. Each RuvB hexamer is contacted by two RuvA subunits (via domain III) on 2 adjacent RuvB subunits; this complex drives branch migration. In the full resolvosome a probable DNA-RuvA(4)-RuvB(12)-RuvC(2) complex forms which resolves the HJ.

The protein resides in the cytoplasm. Its function is as follows. The RuvA-RuvB-RuvC complex processes Holliday junction (HJ) DNA during genetic recombination and DNA repair, while the RuvA-RuvB complex plays an important role in the rescue of blocked DNA replication forks via replication fork reversal (RFR). RuvA specifically binds to HJ cruciform DNA, conferring on it an open structure. The RuvB hexamer acts as an ATP-dependent pump, pulling dsDNA into and through the RuvAB complex. HJ branch migration allows RuvC to scan DNA until it finds its consensus sequence, where it cleaves and resolves the cruciform DNA. This is Holliday junction branch migration complex subunit RuvA from Hathewaya histolytica (Clostridium histolyticum).